A 772-amino-acid polypeptide reads, in one-letter code: Rho guanine nucleotide exchange factor 6 (772 aa).

Positions 1–111 (MNPEERVVTW…TLLAVNKATE (111 aa)) constitute a Calponin-homology (CH) domain. Positions 115-158 (SERPCGRSSSLSATTSSQTNPQAAVPSTTPEQQSEEKAAEMTEN) are disordered. Low complexity predominate over residues 122 to 133 (SSSLSATTSSQT). Ser126 is subject to Phosphoserine. Thr133 is subject to Phosphothreonine. The span at 134 to 146 (NPQAAVPSTTPEQ) shows a compositional bias: polar residues. In terms of domain architecture, SH3 spans 160–219 (SHQLIVKARFNFKQTNEDELSVCKGDIIYVTRVEEGGWWEGTLNGRTGWFPSNYVREIKP). Ser225 carries the phosphoserine modification. Residues 241–421 (YYTVVLQNIL…KSLMGQCQDL (181 aa)) enclose the DH domain. Residues 443–548 (DIKTLGNVIF…WMEQLNRLTK (106 aa)) form the PH domain. Ser488 bears the Phosphoserine mark. Low complexity predominate over residues 557–573 (SKTSSSSCSTHSSFSST). Residues 557–581 (SKTSSSSCSTHSSFSSTGQPRGPLE) are disordered. 2 positions are modified to phosphoserine: Ser640 and Ser680.

In terms of assembly, interacts with PAK kinases through the SH3 domain. Interacts with GIT1. Interacts with PARVB. Component of cytoplasmic complexes, which also contain PXN, GIT1 and PAK1. Interacts with BIN2. Identified in a complex with BIN2 and GIT2. Interacts with PARVG; the guanine nucleotide exchange factor activity of ARHGEF6 is essential for PARVG-induced enhancement of cell spreading.

Its subcellular location is the cell projection. The protein resides in the lamellipodium. Acts as a RAC1 guanine nucleotide exchange factor (GEF). The chain is Rho guanine nucleotide exchange factor 6 (Arhgef6) from Rattus norvegicus (Rat).